Here is a 99-residue protein sequence, read N- to C-terminus: Malonate decarboxylase acyl carrier protein (99 aa).

Serine 25 carries the post-translational modification O-(phosphoribosyl dephospho-coenzyme A)serine.

This sequence belongs to the MdcC family. Post-translationally, covalently binds the prosthetic group of malonate decarboxylase.

It localises to the cytoplasm. Its function is as follows. Subunit of malonate decarboxylase, it is an acyl carrier protein to which acetyl and malonyl thioester residues are bound via a 2'-(5''-phosphoribosyl)-3'-dephospho-CoA prosthetic group and turn over during the catalytic mechanism. This chain is Malonate decarboxylase acyl carrier protein, found in Pseudomonas savastanoi pv. phaseolicola (strain 1448A / Race 6) (Pseudomonas syringae pv. phaseolicola (strain 1448A / Race 6)).